The following is a 169-amino-acid chain: Protein-export protein SecB (169 aa).

Belongs to the SecB family. Homotetramer, a dimer of dimers. One homotetramer interacts with 1 SecA dimer.

The protein localises to the cytoplasm. One of the proteins required for the normal export of preproteins out of the cell cytoplasm. It is a molecular chaperone that binds to a subset of precursor proteins, maintaining them in a translocation-competent state. It also specifically binds to its receptor SecA. The protein is Protein-export protein SecB of Pseudoalteromonas atlantica (strain T6c / ATCC BAA-1087).